The chain runs to 1293 residues: Enterobactin synthase component F (1293 aa).

The segment at 1–301 (MSQHLPLVAA…NVLPLGIHIA (301 aa)) is elongation/condensation. The tract at residues 482–887 (SYREMREQVV…ALPDVEQAVT (406 aa)) is adenylation. Positions 971–1046 (APKAGSETII…KLATIIDGEE (76 aa)) constitute a Carrier domain. Ser-1006 carries the post-translational modification O-(pantetheine 4'-phosphoryl)serine. Residues 1066–1293 (PTLFCFHPAS…GPIIRATLNR (228 aa)) are thioesterase. His-1271 acts as the Proton acceptor; for thioesterase activity in catalysis.

It belongs to the ATP-dependent AMP-binding enzyme family. EntF subfamily. Proteins EntB, EntD, EntE and EntF are the component of the enterobactin synthase. Components probably do not form a stable complex. EntF acts as a catalytic monomer. Pantetheine 4'-phosphate serves as cofactor. 4'-phosphopantetheine is transferred from CoA to a specific serine of apo-EntF by EntD. Holo-EntF so formed is then acylated with seryl-AMP.

Its subcellular location is the cytoplasm. It catalyses the reaction 3 2,3-dihydroxybenzoate + 3 L-serine + 6 ATP = enterobactin + 6 AMP + 6 diphosphate + 4 H(+). It carries out the reaction holo-[peptidyl-carrier protein] + L-serine + ATP = L-seryl-[peptidyl-carrier protein] + AMP + diphosphate. It functions in the pathway siderophore biosynthesis; enterobactin biosynthesis. In terms of biological role, involved in the biosynthesis of the siderophore enterobactin (enterochelin), which is a macrocyclic trimeric lactone of N-(2,3-dihydroxybenzoyl)-serine. EntF catalyzes the activation of L-serine via ATP-dependent PPi exchange reaction to form seryladenylate. Activated L-serine is loaded onto the peptidyl carrier domain via a thioester linkage to the phosphopanthetheine moiety, forming seryl-S-Ppant-EntF. EntF acts then as the sole catalyst for the formation of the three amide and three ester linkages found in enterobactin, using seryladenylate and 2,3-dihydroxybenzoate-S-Ppant-EntB (DHB-S-Ppant-EntB) as substrates, via the formation of a DHB-Ser-S-Ppant-EntF intermediate. The polypeptide is Enterobactin synthase component F (entF) (Escherichia coli O157:H7).